We begin with the raw amino-acid sequence, 517 residues long: Lysophosphatidylcholine acyltransferase 2B (517 aa).

N-linked (GlcNAc...) asparagine glycosylation occurs at Asn-29. The next 3 helical transmembrane spans lie at 70–90, 103–123, and 137–157; these read IVFL…NLPI, LIKP…GFLI, and IFVV…VAGL. Residues 143 to 148 carry the HXXXXD motif motif; sequence HSTFFD. EF-hand domains are found at residues 388–423 and 425–460; these read PISE…LCNP and NTEK…AFGV. Asp-401, Asn-403, Asp-405, Thr-407, Glu-412, Asp-438, Asp-440, Asp-442, Tyr-444, and Glu-449 together coordinate Ca(2+).

It belongs to the 1-acyl-sn-glycerol-3-phosphate acyltransferase family.

The protein resides in the membrane. The protein operates within lipid metabolism; phospholipid metabolism. Its function is as follows. Probable acetyltransferase. This chain is Lysophosphatidylcholine acyltransferase 2B (Lpcat2b), found in Rattus norvegicus (Rat).